Here is a 943-residue protein sequence, read N- to C-terminus: Protein translocase subunit SecA (943 aa).

Residues glutamine 90, 108–112, and aspartate 509 each bind ATP; that span reads GEGKT. The disordered stretch occupies residues 534–576; the sequence is KPDNEHKPPIPQQRSSKAGGGFASKSESISNKNSKSSGASLFP. The span at 556–570 shows a compositional bias: low complexity; that stretch reads ASKSESISNKNSKSS.

It belongs to the SecA family. Monomer and homodimer. Part of the essential Sec protein translocation apparatus which comprises SecA, SecYEG and auxiliary proteins SecDF. Other proteins may also be involved.

Its subcellular location is the cell inner membrane. The protein localises to the cellular thylakoid membrane. It is found in the cytoplasm. The enzyme catalyses ATP + H2O + cellular proteinSide 1 = ADP + phosphate + cellular proteinSide 2.. Functionally, part of the Sec protein translocase complex. Interacts with the SecYEG preprotein conducting channel. Has a central role in coupling the hydrolysis of ATP to the transfer of proteins into and across the cell membrane, serving as an ATP-driven molecular motor driving the stepwise translocation of polypeptide chains across the membrane. In terms of biological role, probably participates in protein translocation into and across both the cytoplasmic and thylakoid membranes in cyanobacterial cells. The sequence is that of Protein translocase subunit SecA from Prochlorococcus marinus (strain MIT 9515).